The chain runs to 434 residues: MKNWRTLILGLVICANTAFAAPQEVDKVAAVVDNGVVLQSDIDGLLQSVKMNAQQSGLQVPDDSTLRHQILERLIMDNIQLQMAKKMGITITDQALDKAIADIAAQNRMTLAQMRSRLAADGLSYDTYREQIRKEMLTSEVRNNEVRRRITILPQEVESLAKQMGNQVSGDTELNLSHILIPLPENPTQQQVDQAEDLANKLVADIKGGADFGKLAIANSADSQALKGGQMGWGKLQELPSLFAERLQSAHKGEIVGPIRSGVGFHILKVNDMRGADQTISVTEVNARHILLKPSPMMTDEQARAKLEAAAAEIKSGKTSFATIAKEISQDPGSAMQGGELGWASPDIYDPAFRDALMKLKKGEISAPVHSSFGWHLIQLVDTRQVDKTDAAQKERAYRMLFNRKFAEEAQTWMQEQRAAAYVKILDGSNAQPQ.

The first 20 residues, M1 to A20, serve as a signal peptide directing secretion. PpiC domains are found at residues D171–D272 and V282–D382.

The protein resides in the periplasm. The enzyme catalyses [protein]-peptidylproline (omega=180) = [protein]-peptidylproline (omega=0). Its function is as follows. Chaperone involved in the correct folding and assembly of outer membrane proteins. Recognizes specific patterns of aromatic residues and the orientation of their side chains, which are found more frequently in integral outer membrane proteins. May act in both early periplasmic and late outer membrane-associated steps of protein maturation. This Yersinia pestis bv. Antiqua (strain Antiqua) protein is Chaperone SurA.